The sequence spans 58 residues: Lantibiotic macedovicin (58 aa).

A propeptide spanning residues 1 to 25 is cleaved from the precursor; sequence MMNATENQIFVETVSDQELEMLIGG. 2,3-didehydrobutyrine occurs at positions 33 and 35. Cross-links (beta-methyllanthionine (Thr-Cys)) lie at residues 33–38 and 35–57; these read TLTKDC and TKDC…CKNC. Residues Cys-46 and Cys-54 are joined by a disulfide bond.

Maturation of macedovicin involves the enzymatic dehydration of Thr-33 and Thr-35 into dehydrobutyrine residues, that can form a beta-methyllanthionine bond with Cys-38 and Cys-57, respectively. This is followed by membrane translocation and cleavage of the modified precursor.

It localises to the secreted. Its function is as follows. Lanthionine-containing peptide antibiotic (lantibiotic) active on Gram-positive bacteria. Macedovicin inhibits a broad spectrum of lactic acid bacteria, several food spoilage species (e.g. Clostridium spp.) and oral streptococci. The bactericidal activity of lantibiotics is based on depolarization of energized bacterial cytoplasmic membranes, initiated by the formation of aqueous transmembrane pores. The protein is Lantibiotic macedovicin of Streptococcus macedonicus (strain ACA-DC 198).